A 362-amino-acid chain; its full sequence is MECSTAIYSLANALGPLKLDSTAPNNSHRTIKAENYFNEDEEDYNENSHEDSEDSKEDSDGQGCRSRKRKEKPPFSYIALIAMAISKRPDKKATLAEIYSYLQENFEFFRGEYAGWRNSIRHNLSLNECFVKLPKDTGESYRGRKGHKWTISDSCEFMLEENGFRRRPRGYKARKRTHFPGVTASNEMGIGGATFDYPSSTTELTDSGTSSLNTDVKNILLNGGEDFGPSISDQLVSSTTSAVLPSLNGPDQSPIYPNYFGYGTAEFPMQWASPTYDWPYYATPHIGLCSSDFPGISPSPTVTPQVSPYFYPPAITTASSFMDDWRFGVSSAAVGAYDSSASFLAAETTAGDVAIPQDLSDC.

A disordered region spans residues 19 to 70 (LDSTAPNNSHRTIKAENYFNEDEEDYNENSHEDSEDSKEDSDGQGCRSRKRK). The span at 37–57 (FNEDEEDYNENSHEDSEDSKE) shows a compositional bias: acidic residues. The segment at residues 72 to 169 (KPPFSYIALI…EENGFRRRPR (98 aa)) is a DNA-binding region (fork-head).

It is found in the nucleus. Its function is as follows. Transcription factor that is required for cell fate of coelomocytes which are non-muscle mesodermal cells. Acts in concert with, and by activating expression of, the homeodomain gene ceh-34. Binds to the sequence motif 5'-ATAAA[T/C]A-3'. This chain is Forkhead box protein F, found in Caenorhabditis elegans.